Here is a 579-residue protein sequence, read N- to C-terminus: CTP synthase (579 aa).

Residues 310-558 (YVELHDAYLS…VAAAIGCLDQ (249 aa)) form the Glutamine amidotransferase type-1 domain. Residues cysteine 402, histidine 531, and glutamate 533 each act as for GATase activity in the active site.

Belongs to the CTP synthase family.

It carries out the reaction UTP + L-glutamine + ATP + H2O = CTP + L-glutamate + ADP + phosphate + 2 H(+). Its pathway is pyrimidine metabolism; CTP biosynthesis via de novo pathway; CTP from UDP: step 2/2. Catalyzes the ATP-dependent amination of UTP to CTP with either L-glutamine or ammonia as the source of nitrogen. This is CTP synthase (pyr-7) from Neurospora crassa (strain ATCC 24698 / 74-OR23-1A / CBS 708.71 / DSM 1257 / FGSC 987).